The following is a 461-amino-acid chain: Cysteine--tRNA ligase (461 aa).

A Zn(2+)-binding site is contributed by Cys28. Residues 30–40 (ITVYDLCHIGH) carry the 'HIGH' region motif. Residues Cys209, His234, and Glu238 each coordinate Zn(2+). The 'KMSKS' region signature appears at 266–270 (KMSKS). Lys269 serves as a coordination point for ATP.

It belongs to the class-I aminoacyl-tRNA synthetase family. Monomer. Zn(2+) serves as cofactor.

Its subcellular location is the cytoplasm. The catalysed reaction is tRNA(Cys) + L-cysteine + ATP = L-cysteinyl-tRNA(Cys) + AMP + diphosphate. This chain is Cysteine--tRNA ligase, found in Escherichia coli O127:H6 (strain E2348/69 / EPEC).